A 532-amino-acid polypeptide reads, in one-letter code: Vesicular acetylcholine transporter unc-17 (532 aa).

Residues 1–31 are Cytoplasmic-facing; that stretch reads MGFNVPVINRDSEILKADAKKWLEQQDNQKK. Residues 32 to 52 traverse the membrane as a helical segment; it reads CVLVIVSIALLLDNMLYMVIV. Over 53-101 the chain is Lumenal, vesicle; sequence PIIPKYLRDIHNYQVTFEGYHNETSQLANGTYLVREVGGRINFLDEELE. Asn74 and Asn81 each carry an N-linked (GlcNAc...) asparagine glycan. A helical transmembrane segment spans residues 102-121; that stretch reads LGWLFASKALLQIFVNPFSG. Residues 122–130 lie on the Cytoplasmic side of the membrane; that stretch reads YIIDRVGYE. The chain crosses the membrane as a helical span at residues 131–151; the sequence is IPMILGLCTMFFSTAIFALGK. Residues 152-160 lie on the Lumenal, vesicle side of the membrane; it reads SYGVLLFAR. Residues 161–180 form a helical membrane-spanning segment; that stretch reads SLQGFGSAFADTSGLAMIAD. At 181 to 191 the chain is on the cytoplasmic side; sequence RFTEENERSAA. Residues 192 to 213 form a helical membrane-spanning segment; sequence LGIALAFISFGCLVAPPFGSVL. The Lumenal, vesicle segment spans residues 214-219; that stretch reads YSLAGK. A helical membrane pass occupies residues 220-242; sequence PVPFLILSFVCLADAIAVFMVIN. Over 243 to 266 the chain is Cytoplasmic; sequence PHRRGTDSHGEKVQGTPMWRLFMD. Residues 267 to 286 form a helical membrane-spanning segment; that stretch reads PFIACCSGALIMANVSLAFL. Residues 287-303 lie on the Lumenal, vesicle side of the membrane; it reads EPTITTWMSEMMPDTPG. Residues 304–328 form a helical membrane-spanning segment; that stretch reads WLVGVIWLPPFFPHVLGVYVTVKML. Over 329–335 the chain is Cytoplasmic; sequence RAFPHHT. Residues 336-356 form a helical membrane-spanning segment; the sequence is WAIAMVGLAMEGIACFAIPYT. The Lumenal, vesicle segment spans residues 357–367; that stretch reads TSVMQLVIPLS. A helical membrane pass occupies residues 368-388; that stretch reads FVCFGIALIDTSLLPMLGHLV. Residues 389 to 393 are Cytoplasmic-facing; sequence DTRHV. A helical transmembrane segment spans residues 394 to 412; sequence SVYGSVYAIADISYSLAYA. Residues 413–418 are Lumenal, vesicle-facing; sequence FGPIIA. Residues 419–440 traverse the membrane as a helical segment; sequence GWIVTNWGFTALNIIIFATNVT. The Cytoplasmic portion of the chain corresponds to 441 to 532; sequence YAPVLFLLRK…AGYDPLNPQW (92 aa).

Belongs to the major facilitator superfamily. Vesicular transporter family. In terms of tissue distribution, detected in most regions of the nervous system including the nerve ring, the ventral and dorsal nerve cords, and the pharyngeal nervous system. Expressed in most cholinergic neurons. In addition, expressed in SIA, SIB and SMB sublateral motor neurons.

The protein localises to the cytoplasmic vesicle. Its subcellular location is the secretory vesicle. It is found in the synaptic vesicle membrane. Functionally, involved in acetylcholine transport into synaptic vesicles. In Caenorhabditis elegans, this protein is Vesicular acetylcholine transporter unc-17.